Here is a 1532-residue protein sequence, read N- to C-terminus: Multidrug resistance-associated protein 1 (1532 aa).

At 1 to 33 the chain is on the extracellular side; it reads MALSSFCSSDGSDPLWDWNVTWHTSNPDFTKCF. Residue N19 is glycosylated (N-linked (GlcNAc...) asparagine). A helical membrane pass occupies residues 34–54; the sequence is QNTVLTWVPCFYLWSCFPLYF. At 55–74 the chain is on the cytoplasmic side; the sequence is LYLSRHDRGYIQMTHLNKAK. A helical membrane pass occupies residues 75 to 95; that stretch reads TALGFFLWIICWADLFYSFWE. Over 96–100 the chain is Extracellular; that stretch reads RSQGM. The helical transmembrane segment at 101–121 threads the bilayer; the sequence is LLAPVLLVSPTLLGITMLLAT. The Cytoplasmic portion of the chain corresponds to 122-133; sequence FLIQFERRKGVQ. Residues 134–154 traverse the membrane as a helical segment; sequence SSGIMLTFWLVALLCALAILR. The Extracellular portion of the chain corresponds to 155 to 172; that stretch reads SKIISALKKDAQVDMFRD. A helical transmembrane segment spans residues 173–193; it reads SAFYLYFTLVFIQLVLSCFSD. Residues 194–317 lie on the Cytoplasmic side of the membrane; the sequence is SSPLFSETVR…KDRDPSLFKV (124 aa). Y277 carries the post-translational modification Phosphotyrosine. A Phosphoserine modification is found at S290. A helical membrane pass occupies residues 318-338; that stretch reads LYKTFGPYFLMSFLYKALHDL. In terms of domain architecture, ABC transmembrane type-1 1 spans 326–609; it reads FLMSFLYKAL…LPMVISSIVQ (284 aa). The Extracellular portion of the chain corresponds to 339 to 364; it reads MMFAGPEILELIINFVNDREAPDWQG. Residues 365–385 form a helical membrane-spanning segment; it reads YLYTALLFVSACLQTLALHQY. At 386–441 the chain is on the cytoplasmic side; that stretch reads FHICFVTGMRIKTAVVGAVYRKALVITNSARKSSTVGEIVNLMSVDAQRFMDLATY. Residues 442–462 traverse the membrane as a helical segment; that stretch reads INMIWSAPLQVTLALYFLWLN. The Extracellular portion of the chain corresponds to 463 to 465; sequence LGP. The helical transmembrane segment at 466–486 threads the bilayer; the sequence is SVLAGVAVMILMVPFNAVMAM. At 487–548 the chain is on the cytoplasmic side; the sequence is KTKTYQVAHM…VLKKSAYLAA (62 aa). An N6-succinyllysine modification is found at K504. A helical membrane pass occupies residues 549–569; the sequence is VGTFTWVCTPFLVALSTFAVF. Over 570–591 the chain is Extracellular; the sequence is VTVDEKNILDAKKAFVSLALFN. A helical membrane pass occupies residues 592 to 612; it reads ILRFPLNILPMVISSIVQASV. At 613 to 967 the chain is on the cytoplasmic side; sequence SLKRLRIFLS…VKLSVYWNYM (355 aa). One can recognise an ABC transporter 1 domain in the interval 645-869; that stretch reads ITVKNATFTW…DGAFAEFVRT (225 aa). Residue 679–686 coordinates ATP; sequence GQVGCGKS. Residues S879, S883, S916, and S931 each carry the phosphoserine modification. A helical transmembrane segment spans residues 968–988; the sequence is KAIGLCISFLSIFLFLCNHVS. In terms of domain architecture, ABC transmembrane type-1 2 spans 975 to 1257; that stretch reads SFLSIFLFLC…LVRMSSEMET (283 aa). Residues 989–1026 lie on the Extracellular side of the membrane; it reads ALASNYWLSLWTDDRPAVNGTQENRNFRLSVYGALGIL. The chain crosses the membrane as a helical span at residues 1027–1047; that stretch reads QGVAVFGYSMAVSIGGIFASR. Residues 1048 to 1090 lie on the Cytoplasmic side of the membrane; the sequence is RLHLDLLQNVLRSPMSFFERTPSGNLVNRFSKELDTVDSMIPQ. The helical transmembrane segment at 1091–1111 threads the bilayer; sequence VIKMFMGSLFSVIGAVIIILL. A1112 is a topological domain (extracellular). The helical transmembrane segment at 1113 to 1133 threads the bilayer; it reads TPIAAVIIPPLGLVYFFVQRF. Residues 1134-1204 are Cytoplasmic-facing; that stretch reads YVASSRQLKR…VANRWLAVRL (71 aa). A helical transmembrane segment spans residues 1205–1225; the sequence is ECVGNCIVLFAALFAVISRHS. Residues 1226 to 1227 are Extracellular-facing; sequence LS. Residues 1228–1248 traverse the membrane as a helical segment; sequence AGLVGLSVSYSLQITAYLNWL. Residues 1249 to 1532 are Cytoplasmic-facing; the sequence is VRMSSEMETN…YSMAKDAGLV (284 aa). The ABC transporter 2 domain maps to 1294-1528; it reads VEFRDYCLRY…RGVFYSMAKD (235 aa). 1328–1335 is a binding site for ATP; it reads GRTGAGKS.

The protein belongs to the ABC transporter superfamily. ABCC family. Conjugate transporter (TC 3.A.1.208) subfamily. Glycosylated. As to expression, skeletal muscle, brain, heart, spleen, lung and kidney.

It is found in the cell membrane. The protein resides in the basolateral cell membrane. It carries out the reaction ATP + H2O + xenobioticSide 1 = ADP + phosphate + xenobioticSide 2.. It catalyses the reaction an S-substituted glutathione(in) + ATP + H2O = an S-substituted glutathione(out) + ADP + phosphate + H(+). The catalysed reaction is sphing-4-enine 1-phosphate(in) + ATP + H2O = sphing-4-enine 1-phosphate(out) + ADP + phosphate + H(+). The enzyme catalyses leukotriene C4(in) + ATP + H2O = leukotriene C4(out) + ADP + phosphate + H(+). It carries out the reaction 17beta-estradiol 17-O-(beta-D-glucuronate)(in) + ATP + H2O = 17beta-estradiol 17-O-(beta-D-glucuronate)(out) + ADP + phosphate + H(+). It catalyses the reaction daunorubicin(in) + ATP + H2O = daunorubicin(out) + ADP + phosphate + H(+). The catalysed reaction is vincristine(in) + ATP + H2O = vincristine(out) + ADP + phosphate + H(+). The enzyme catalyses 2',3'-cGAMP(in) + ATP + H2O = 2',3'-cGAMP(out) + ADP + phosphate + H(+). It carries out the reaction S-[(2E,6E,10E)-geranylgeranyl]-L-glutathione(in) + ATP + H2O = S-[(2E,6E,10E)-geranylgeranyl]-L-glutathione(out) + ADP + phosphate + H(+). It catalyses the reaction prostaglandin A2-S-(R)-glutathione(in) + ATP + H2O = prostaglandin A2-S-(R)-glutathione(out) + ADP + phosphate + H(+). The catalysed reaction is prostaglandin A2-S-(S)-glutathione(in) + ATP + H2O = prostaglandin A2-S-(S)-glutathione(out) + ADP + phosphate + H(+). MK 571 inhibits sphingosine 1-phosphate and leukotriene C4 export. Functionally, mediates export of organic anions and drugs from the cytoplasm. Mediates ATP-dependent transport of glutathione and glutathione conjugates, leukotriene C4, estradiol-17-beta-o-glucuronide, methotrexate, antiviral drugs and other xenobiotics. Confers resistance to anticancer drugs by decreasing accumulation of drug in cells, and by mediating ATP- and GSH-dependent drug export. Hydrolyzes ATP with low efficiency. Catalyzes the export of sphingosine 1-phosphate from mast cells independently of their degranulation. Participates in inflammatory response by allowing export of leukotriene C4 from leukotriene C4-synthesizing cells. Exports S-geranylgeranyl-glutathione (GGG) in lymphoid cells and stromal compartments of lymphoid organs. ABCC1 (via extracellular transport) with GGT5 (via GGG catabolism) establish GGG gradients within lymphoid tissues to position P2RY8-positive lymphocytes at germinal centers in lymphoid follicles and restrict their chemotactic transmigration from blood vessels to the bone marrow parenchyma. Mediates basolateral export of GSH-conjugated R- and S-prostaglandin A2 diastereomers in polarized epithelial cells. This chain is Multidrug resistance-associated protein 1, found in Rattus norvegicus (Rat).